The primary structure comprises 387 residues: S-adenosylmethionine synthase (387 aa).

His16 contacts ATP. Asp18 is a Mg(2+) binding site. Glu44 provides a ligand contact to K(+). 2 residues coordinate L-methionine: Glu57 and Gln100. The segment at 100-110 (QSPDIAQGVDR) is flexible loop. Residues 167-169 (DAK), 232-233 (RF), Asp241, 247-248 (RK), Ala264, and Lys268 each bind ATP. Residue Asp241 participates in L-methionine binding. Residue Lys272 participates in L-methionine binding.

Belongs to the AdoMet synthase family. As to quaternary structure, homotetramer; dimer of dimers. Mg(2+) serves as cofactor. The cofactor is K(+).

The protein localises to the cytoplasm. It carries out the reaction L-methionine + ATP + H2O = S-adenosyl-L-methionine + phosphate + diphosphate. The protein operates within amino-acid biosynthesis; S-adenosyl-L-methionine biosynthesis; S-adenosyl-L-methionine from L-methionine: step 1/1. Its function is as follows. Catalyzes the formation of S-adenosylmethionine (AdoMet) from methionine and ATP. The overall synthetic reaction is composed of two sequential steps, AdoMet formation and the subsequent tripolyphosphate hydrolysis which occurs prior to release of AdoMet from the enzyme. This chain is S-adenosylmethionine synthase, found in Cupriavidus necator (strain ATCC 17699 / DSM 428 / KCTC 22496 / NCIMB 10442 / H16 / Stanier 337) (Ralstonia eutropha).